The following is a 279-amino-acid chain: Oxygen-dependent coproporphyrinogen-III oxidase (279 aa).

Residue Ser102 participates in substrate binding. Positions 106 and 116 each coordinate a divalent metal cation. His116 serves as the catalytic Proton donor. Position 118–120 (118–120) interacts with substrate; the sequence is NTR. A divalent metal cation contacts are provided by His149 and His179. Residues 244–279 form an important for dimerization region; the sequence is YVEFNLLYDRGTKFGLMTDGNIEAILMSLPPVVKFN.

This sequence belongs to the aerobic coproporphyrinogen-III oxidase family. Homodimer. Requires a divalent metal cation as cofactor.

The protein resides in the cytoplasm. It catalyses the reaction coproporphyrinogen III + O2 + 2 H(+) = protoporphyrinogen IX + 2 CO2 + 2 H2O. It participates in porphyrin-containing compound metabolism; protoporphyrin-IX biosynthesis; protoporphyrinogen-IX from coproporphyrinogen-III (O2 route): step 1/1. In terms of biological role, involved in the heme biosynthesis. Catalyzes the aerobic oxidative decarboxylation of propionate groups of rings A and B of coproporphyrinogen-III to yield the vinyl groups in protoporphyrinogen-IX. The chain is Oxygen-dependent coproporphyrinogen-III oxidase from Rickettsia typhi (strain ATCC VR-144 / Wilmington).